Here is a 248-residue protein sequence, read N- to C-terminus: MKNTLKLPLLIGVAGGTSCGKSTIVERIIENLNANAKQSGRQIDIVHLSLHSFYRELSAEEKILAREGKFNFDHPDQINFDLLAETLQNMIDGKTVEIPKYDMITSSMNGTVTVEPAKVIIIEGILLLYDERVRKLLSTKLFVEKNAESRLRNRLATYIRDYHRAPLSIIRQYTEFVKPAFEEFCRPTKKYADVIIPRGADNHVATDLIAKNLQETFRKIVVSSDEEEEKENELVKQGSFRRPFSRPH.

An ATP-binding site is contributed by 15 to 23 (GGTSCGKST). 5 residues coordinate substrate: aspartate 73, tyrosine 101, arginine 154, arginine 164, and glutamine 172. Position 201 (aspartate 201) interacts with ATP. Residues 224 to 248 (SDEEEEKENELVKQGSFRRPFSRPH) form a disordered region.

The protein belongs to the uridine kinase family.

It carries out the reaction uridine + ATP = UMP + ADP + H(+). The enzyme catalyses cytidine + ATP = CMP + ADP + H(+). Its pathway is pyrimidine metabolism; CTP biosynthesis via salvage pathway; CTP from cytidine: step 1/3. It participates in pyrimidine metabolism; UMP biosynthesis via salvage pathway; UMP from uridine: step 1/1. The polypeptide is Probable uridine-cytidine kinase (Caenorhabditis elegans).